Consider the following 212-residue polypeptide: Interleukin-6 (212 aa).

A signal peptide spans 1-29 (MNSFSTSAFGPVAFSLGLLLVLPAAFPAP). Cys72 and Cys78 are disulfide-bonded. An N-linked (GlcNAc...) asparagine glycan is attached at Asn73. The residue at position 81 (Ser81) is a Phosphoserine; by FAM20C. A disulfide bridge links Cys101 with Cys111.

The protein belongs to the IL-6 superfamily. As to quaternary structure, component of a hexamer of two molecules each of IL6, IL6R and IL6ST; first binds to IL6R to associate with the signaling subunit IL6ST. Interacts with IL6R (via the N-terminal ectodomain); this interaction may be affected by IL6R-binding with SORL1, hence decreasing IL6 cis signaling. Interacts with SORL1 (via the N-terminal ectodomain); this interaction leads to IL6 internalization and lysosomal degradation. May form a trimeric complex with the soluble SORL1 ectodomain and soluble IL6R receptor; this interaction might stabilize circulating IL6, hence promoting IL6 trans signaling. Post-translationally, N- and O-glycosylated. Produced by skeletal muscle.

The protein localises to the secreted. Its function is as follows. Cytokine with a wide variety of biological functions in immunity, tissue regeneration, and metabolism. Binds to IL6R, then the complex associates to the signaling subunit IL6ST/gp130 to trigger the intracellular IL6-signaling pathway. The interaction with the membrane-bound IL6R and IL6ST stimulates 'classic signaling', whereas the binding of IL6 and soluble IL6R to IL6ST stimulates 'trans-signaling'. Alternatively, 'cluster signaling' occurs when membrane-bound IL6:IL6R complexes on transmitter cells activate IL6ST receptors on neighboring receiver cells. IL6 is a potent inducer of the acute phase response. Rapid production of IL6 contributes to host defense during infection and tissue injury, but excessive IL6 synthesis is involved in disease pathology. In the innate immune response, is synthesized by myeloid cells, such as macrophages and dendritic cells, upon recognition of pathogens through toll-like receptors (TLRs) at the site of infection or tissue injury. In the adaptive immune response, is required for the differentiation of B cells into immunoglobulin-secreting cells. Plays a major role in the differentiation of CD4(+) T cell subsets. Essential factor for the development of T follicular helper (Tfh) cells that are required for the induction of germinal-center formation. Required to drive naive CD4(+) T cells to the Th17 lineage. Also required for proliferation of myeloma cells and the survival of plasmablast cells. In terms of biological role, acts as an essential factor in bone homeostasis and on vessels directly or indirectly by induction of VEGF, resulting in increased angiogenesis activity and vascular permeability. Induces, through 'trans-signaling' and synergistically with IL1B and TNF, the production of VEGF. Involved in metabolic controls, is discharged into the bloodstream after muscle contraction increasing lipolysis and improving insulin resistance. 'Trans-signaling' in central nervous system also regulates energy and glucose homeostasis. Mediates, through GLP-1, crosstalk between insulin-sensitive tissues, intestinal L cells and pancreatic islets to adapt to changes in insulin demand. Also acts as a myokine. Plays a protective role during liver injury, being required for maintenance of tissue regeneration. Also has a pivotal role in iron metabolism by regulating HAMP/hepcidin expression upon inflammation or bacterial infection. Through activation of IL6ST-YAP-NOTCH pathway, induces inflammation-induced epithelial regeneration. This Homo sapiens (Human) protein is Interleukin-6.